The chain runs to 135 residues: Transcription antitermination protein NusB (135 aa).

This sequence belongs to the NusB family.

Its function is as follows. Involved in transcription antitermination. Required for transcription of ribosomal RNA (rRNA) genes. Binds specifically to the boxA antiterminator sequence of the ribosomal RNA (rrn) operons. The polypeptide is Transcription antitermination protein NusB (Shewanella piezotolerans (strain WP3 / JCM 13877)).